The chain runs to 190 residues: RNA pyrophosphohydrolase (190 aa).

Residues 6 to 149 form the Nudix hydrolase domain; the sequence is GYRPNVGIVL…KRGVYARALC (144 aa). A Nudix box motif is present at residues 38–59; sequence GGMHSDETPVEAMYRELNEEIG.

It belongs to the Nudix hydrolase family. RppH subfamily. A divalent metal cation serves as cofactor.

Functionally, accelerates the degradation of transcripts by removing pyrophosphate from the 5'-end of triphosphorylated RNA, leading to a more labile monophosphorylated state that can stimulate subsequent ribonuclease cleavage. The sequence is that of RNA pyrophosphohydrolase from Xylella fastidiosa (strain M12).